Consider the following 270-residue polypeptide: Zinc transporter ZupT (270 aa).

The next 8 helical transmembrane spans lie at 8-28 (ILVV…GGFI), 40-60 (LTFA…VELL), 78-98 (WIAI…DYLV), 131-151 (ILFA…TFAA), 162-182 (IALA…VPLY), 192-212 (LFYS…AMFF), 216-236 (FLTP…MVFI), and 250-270 (HHHI…IVLI). N141 and E144 together coordinate Fe(2+). Zn(2+) contacts are provided by E144 and H169. The Fe(2+) site is built by N170, E173, and E202. Residue E173 participates in Zn(2+) binding.

Belongs to the ZIP transporter (TC 2.A.5) family. ZupT subfamily.

It is found in the cell membrane. It carries out the reaction Zn(2+)(in) = Zn(2+)(out). In terms of biological role, mediates zinc uptake. May also transport other divalent cations. The polypeptide is Zinc transporter ZupT (Akkermansia muciniphila (strain ATCC BAA-835 / DSM 22959 / JCM 33894 / BCRC 81048 / CCUG 64013 / CIP 107961 / Muc)).